The sequence spans 257 residues: Tryptophan synthase alpha chain (257 aa).

Residues Glu47 and Asp58 each act as proton acceptor in the active site.

Belongs to the TrpA family. In terms of assembly, tetramer of two alpha and two beta chains.

The catalysed reaction is (1S,2R)-1-C-(indol-3-yl)glycerol 3-phosphate + L-serine = D-glyceraldehyde 3-phosphate + L-tryptophan + H2O. It functions in the pathway amino-acid biosynthesis; L-tryptophan biosynthesis; L-tryptophan from chorismate: step 5/5. Its function is as follows. The alpha subunit is responsible for the aldol cleavage of indoleglycerol phosphate to indole and glyceraldehyde 3-phosphate. The protein is Tryptophan synthase alpha chain of Listeria welshimeri serovar 6b (strain ATCC 35897 / DSM 20650 / CCUG 15529 / CIP 8149 / NCTC 11857 / SLCC 5334 / V8).